The chain runs to 200 residues: Probable molybdenum cofactor guanylyltransferase (200 aa).

Residues leucine 8–glycine 10, lysine 20, aspartate 66, and aspartate 97 contribute to the GTP site. Aspartate 97 provides a ligand contact to Mg(2+).

It belongs to the MobA family. Requires Mg(2+) as cofactor.

Its subcellular location is the cytoplasm. The catalysed reaction is Mo-molybdopterin + GTP + H(+) = Mo-molybdopterin guanine dinucleotide + diphosphate. In terms of biological role, transfers a GMP moiety from GTP to Mo-molybdopterin (Mo-MPT) cofactor (Moco or molybdenum cofactor) to form Mo-molybdopterin guanine dinucleotide (Mo-MGD) cofactor. The sequence is that of Probable molybdenum cofactor guanylyltransferase from Bacillus velezensis (strain DSM 23117 / BGSC 10A6 / LMG 26770 / FZB42) (Bacillus amyloliquefaciens subsp. plantarum).